We begin with the raw amino-acid sequence, 305 residues long: Glycine--tRNA ligase alpha subunit (305 aa).

The protein belongs to the class-II aminoacyl-tRNA synthetase family. Tetramer of two alpha and two beta subunits.

Its subcellular location is the cytoplasm. The catalysed reaction is tRNA(Gly) + glycine + ATP = glycyl-tRNA(Gly) + AMP + diphosphate. This chain is Glycine--tRNA ligase alpha subunit, found in Vibrio parahaemolyticus serotype O3:K6 (strain RIMD 2210633).